Here is a 210-residue protein sequence, read N- to C-terminus: Tetraspanin-31 (210 aa).

Residues 1 to 12 (MVCGGFACSRNA) lie on the Cytoplasmic side of the membrane. A helical membrane pass occupies residues 13-33 (LCALNVVYMLVGFLLIGVAAW). Over 34-44 (GKGLGVVSSIH) the chain is Extracellular. Residues 45-65 (IIGGVIAVGVFLLLIAVAGLV) form a helical membrane-spanning segment. Over 66–72 (GAANHHQ) the chain is Cytoplasmic. Residues 73–93 (VLLFFYMIILGLVFIFQFGIS) traverse the membrane as a helical segment. The Extracellular segment spans residues 94–173 (CSCLAINRNT…FLKHSDKALK (80 aa)). N109, N117, and N134 each carry an N-linked (GlcNAc...) asparagine glycan. Residues 174 to 194 (ILGGVGLFFSFTEILGVWLAM) traverse the membrane as a helical segment. At 195–210 (RFRNQKDPRANPSAFL) the chain is on the cytoplasmic side.

This sequence belongs to the tetraspanin (TM4SF) family.

It is found in the membrane. The chain is Tetraspanin-31 (Tspan31) from Mus musculus (Mouse).